Reading from the N-terminus, the 132-residue chain is Putative nickel-responsive regulator (132 aa).

The Ni(2+) site is built by His-77, His-88, His-90, and Cys-96.

The protein belongs to the transcriptional regulatory CopG/NikR family. Ni(2+) is required as a cofactor.

Transcriptional regulator. This Brucella abortus (strain S19) protein is Putative nickel-responsive regulator.